Reading from the N-terminus, the 458-residue chain is SLIT-ROBO Rho GTPase-activating protein 2B (458 aa).

The F-BAR domain maps to 22-324; that stretch reads KEIRAQLTEQ…AVENLDATSD (303 aa). A compositionally biased stretch (basic and acidic residues) spans 181–203; sequence LKEAEKQEEKQIGKSVKQEDRQT. The segment at 181–214 is disordered; that stretch reads LKEAEKQEEKQIGKSVKQEDRQTPRSPDSTANVR. Residues 362 to 400 adopt a coiled-coil conformation; that stretch reads QSELLQRCQQLQSRLSTLKIENEEVKKTMEATLQTIQDI.

As to quaternary structure, may interact with SRGAP2; formation of the heterodimer alters SRGAP2 function.

May regulate cell migration and differentiation through interaction with and inhibition of SRGAP2. In contrast to SRGAP2C, it is not able to induce long-lasting changes in synaptic density throughout adulthood. The chain is SLIT-ROBO Rho GTPase-activating protein 2B (SRGAP2B) from Homo sapiens (Human).